Consider the following 526-residue polypeptide: ESX-1 secretion-associated protein EspB (526 aa).

Residues 1–23 are compositionally biased toward basic and acidic residues; it reads MSEELKYELPGLERKAHECESTR. Disordered regions lie at residues 1–35, 91–110, and 271–526; these read MSEELKYELPGLERKAHECESTRPEGPGDATKPDE, RQMNGSDAPPPAAEAVVPDM, and QIQE…GKQQ. Residues 303–328 are compositionally biased toward gly residues; sequence GGPGGPGSGSGGGSGGGASGGSGGGT. Over residues 335-362 the composition is skewed to low complexity; that stretch reads PSTDPSMSPMSTNSAGEEQSSGSPSSGG. A compositionally biased stretch (gly residues) spans 363 to 387; it reads SSSGGSPSGGSPSGGGAPSSGGMPE. A compositionally biased stretch (low complexity) spans 393 to 405; it reads DMPGGPDIPGLDD. Gly residues predominate over residues 413 to 429; it reads AGGGGGGGVGGGGGGGM. The span at 430-440 shows a compositional bias: low complexity; the sequence is PAAPLGPAVGA. Residues 451–484 are compositionally biased toward gly residues; that stretch reads RGGGVGVPTGTGGGAGGMMGGGMGGMGAGHGQGQ. Positions 485 to 508 are enriched in basic and acidic residues; that stretch reads GKEKKRDPKLAPDEDLYTEDRAHS.

It belongs to the EspB family.

The protein resides in the secreted. Involved in DNA conjugation, at least in the recipient strain. This is ESX-1 secretion-associated protein EspB from Mycolicibacterium smegmatis (strain MKD8) (Mycobacterium smegmatis).